A 370-amino-acid polypeptide reads, in one-letter code: tRNA 2-selenouridine synthase (370 aa).

The region spanning 12–136 is the Rhodanese domain; the sequence is FLDDVPMMDM…MRTFLLETTQ (125 aa). Cys95 (S-selanylcysteine intermediate) is an active-site residue.

It belongs to the SelU family. In terms of assembly, monomer.

The catalysed reaction is 5-methylaminomethyl-2-thiouridine(34) in tRNA + selenophosphate + (2E)-geranyl diphosphate + H2O + H(+) = 5-methylaminomethyl-2-selenouridine(34) in tRNA + (2E)-thiogeraniol + phosphate + diphosphate. It carries out the reaction 5-methylaminomethyl-2-thiouridine(34) in tRNA + (2E)-geranyl diphosphate = 5-methylaminomethyl-S-(2E)-geranyl-thiouridine(34) in tRNA + diphosphate. It catalyses the reaction 5-methylaminomethyl-S-(2E)-geranyl-thiouridine(34) in tRNA + selenophosphate + H(+) = 5-methylaminomethyl-2-(Se-phospho)selenouridine(34) in tRNA + (2E)-thiogeraniol. The enzyme catalyses 5-methylaminomethyl-2-(Se-phospho)selenouridine(34) in tRNA + H2O = 5-methylaminomethyl-2-selenouridine(34) in tRNA + phosphate. Functionally, involved in the post-transcriptional modification of the uridine at the wobble position (U34) of tRNA(Lys), tRNA(Glu) and tRNA(Gln). Catalyzes the conversion of 2-thiouridine (S2U-RNA) to 2-selenouridine (Se2U-RNA). Acts in a two-step process involving geranylation of 2-thiouridine (S2U) to S-geranyl-2-thiouridine (geS2U) and subsequent selenation of the latter derivative to 2-selenouridine (Se2U) in the tRNA chain. The polypeptide is tRNA 2-selenouridine synthase (Pseudomonas putida (strain GB-1)).